Here is a 985-residue protein sequence, read N- to C-terminus: Regulator of telomere elongation helicase 1 homolog (985 aa).

Residues Ala-7–Asp-303 enclose the Helicase ATP-binding domain. Ser-42–Thr-49 provides a ligand contact to ATP. 4 residues coordinate [4Fe-4S] cluster: Cys-146, Cys-164, Cys-173, and Cys-209. The DEAH box motif lies at Asp-252–His-255. Thr-874 bears the Phosphothreonine mark.

Belongs to the helicase family. RAD3/XPD subfamily.

It is found in the nucleus. It catalyses the reaction ATP + H2O = ADP + phosphate + H(+). In terms of biological role, a probable ATP-dependent DNA helicase implicated in DNA repair and the maintenance of genomic stability. Acts as an anti-recombinase to counteract toxic recombination and limit crossover during meiosis. Regulates meiotic recombination and crossover homeostasis by physically dissociating strand invasion events and thereby promotes noncrossover repair by meiotic synthesis dependent strand annealing (SDSA) as well as disassembly of D loop recombination intermediates. This chain is Regulator of telomere elongation helicase 1 homolog, found in Drosophila erecta (Fruit fly).